Reading from the N-terminus, the 620-residue chain is Dihydroxy-acid dehydratase (620 aa).

Asp-81 contacts Mg(2+). Residue Cys-122 participates in [2Fe-2S] cluster binding. Residues Asp-123 and Lys-124 each contribute to the Mg(2+) site. N6-carboxylysine is present on Lys-124. Cys-195 is a binding site for [2Fe-2S] cluster. Glu-491 serves as a coordination point for Mg(2+). The Proton acceptor role is filled by Ser-517.

The protein belongs to the IlvD/Edd family. As to quaternary structure, homodimer. [2Fe-2S] cluster is required as a cofactor. Requires Mg(2+) as cofactor.

It carries out the reaction (2R)-2,3-dihydroxy-3-methylbutanoate = 3-methyl-2-oxobutanoate + H2O. The catalysed reaction is (2R,3R)-2,3-dihydroxy-3-methylpentanoate = (S)-3-methyl-2-oxopentanoate + H2O. Its pathway is amino-acid biosynthesis; L-isoleucine biosynthesis; L-isoleucine from 2-oxobutanoate: step 3/4. It participates in amino-acid biosynthesis; L-valine biosynthesis; L-valine from pyruvate: step 3/4. Its function is as follows. Functions in the biosynthesis of branched-chain amino acids. Catalyzes the dehydration of (2R,3R)-2,3-dihydroxy-3-methylpentanoate (2,3-dihydroxy-3-methylvalerate) into 2-oxo-3-methylpentanoate (2-oxo-3-methylvalerate) and of (2R)-2,3-dihydroxy-3-methylbutanoate (2,3-dihydroxyisovalerate) into 2-oxo-3-methylbutanoate (2-oxoisovalerate), the penultimate precursor to L-isoleucine and L-valine, respectively. The chain is Dihydroxy-acid dehydratase from Colwellia psychrerythraea (strain 34H / ATCC BAA-681) (Vibrio psychroerythus).